The chain runs to 260 residues: MSTNNSVLVLKVGGALLQCEMGMARLMDTAAAMLANGQQVLMVHGGGCLVDEQLAANGMETVKLEGLRVTPPEQMPIIAGALAGTSNKILQGAATKAGIVSVGMSLADGNTVSAKIKDERLGLVGEVTPKDGAYLKFILAQGWMPICSSIAMMDDGQMLNVNADQAATALAKLVGGKLVLLSDVSGVLDGKGQLIHSLNGKQIADLVKQGVIEKGMKVKVEAALEVAQWMGQAVQVASWRDASQLIALAKGEAVGTQIQP.

Residues 46–47 (GG), Arg-68, and Asn-160 each bind substrate.

Belongs to the acetylglutamate kinase family. ArgB subfamily.

It is found in the cytoplasm. The catalysed reaction is N-acetyl-L-glutamate + ATP = N-acetyl-L-glutamyl 5-phosphate + ADP. Its pathway is amino-acid biosynthesis; L-arginine biosynthesis; N(2)-acetyl-L-ornithine from L-glutamate: step 2/4. Its function is as follows. Catalyzes the ATP-dependent phosphorylation of N-acetyl-L-glutamate. This is Acetylglutamate kinase from Shewanella baltica (strain OS223).